The primary structure comprises 338 residues: Ketol-acid reductoisomerase (NADP(+)) (338 aa).

Residues 1–181 form the KARI N-terminal Rossmann domain; the sequence is MKVFYDKDAD…GGGRAGIIET (181 aa). NADP(+) contacts are provided by residues 24–27, R47, and S52; that span reads YGSQ. The active site involves H107. Residue G133 participates in NADP(+) binding. The region spanning 182 to 327 is the KARI C-terminal knotted domain; sequence NFREETETDL…AKLRAMMPWI (146 aa). Positions 190, 194, 226, and 230 each coordinate Mg(2+). S251 contributes to the substrate binding site.

It belongs to the ketol-acid reductoisomerase family. The cofactor is Mg(2+).

The catalysed reaction is (2R)-2,3-dihydroxy-3-methylbutanoate + NADP(+) = (2S)-2-acetolactate + NADPH + H(+). It carries out the reaction (2R,3R)-2,3-dihydroxy-3-methylpentanoate + NADP(+) = (S)-2-ethyl-2-hydroxy-3-oxobutanoate + NADPH + H(+). It functions in the pathway amino-acid biosynthesis; L-isoleucine biosynthesis; L-isoleucine from 2-oxobutanoate: step 2/4. Its pathway is amino-acid biosynthesis; L-valine biosynthesis; L-valine from pyruvate: step 2/4. Involved in the biosynthesis of branched-chain amino acids (BCAA). Catalyzes an alkyl-migration followed by a ketol-acid reduction of (S)-2-acetolactate (S2AL) to yield (R)-2,3-dihydroxy-isovalerate. In the isomerase reaction, S2AL is rearranged via a Mg-dependent methyl migration to produce 3-hydroxy-3-methyl-2-ketobutyrate (HMKB). In the reductase reaction, this 2-ketoacid undergoes a metal-dependent reduction by NADPH to yield (R)-2,3-dihydroxy-isovalerate. This chain is Ketol-acid reductoisomerase (NADP(+)), found in Cupriavidus necator (strain ATCC 17699 / DSM 428 / KCTC 22496 / NCIMB 10442 / H16 / Stanier 337) (Ralstonia eutropha).